The sequence spans 447 residues: Protein O-GlcNAcase (447 aa).

In terms of domain architecture, GH84 spans 1 to 277 (MLTGVIEGFY…TTGAYLADPD (277 aa)). Positions 8, 39, and 115 each coordinate a protein. The Proton donor role is filled by Asp-116. A protein is bound by residues Tyr-160, 219–221 (WDN), Asp-226, and Asn-254.

The protein belongs to the glycosyl hydrolase 84 family.

It catalyses the reaction 3-O-(N-acetyl-beta-D-glucosaminyl)-L-seryl-[protein] + H2O = N-acetyl-D-glucosamine + L-seryl-[protein]. The enzyme catalyses 3-O-(N-acetyl-beta-D-glucosaminyl)-L-threonyl-[protein] + H2O = L-threonyl-[protein] + N-acetyl-D-glucosamine. Inhibited by PUGNac (O-(2-acetamido-2-deoxy-D-glucopyranosylidene)amino-N-phenylcarbamate). Its function is as follows. Cleaves GlcNAc from O-glycosylated proteins. Can use p-nitrophenyl-beta-GlcNAc and 4-methylumbelliferone-GlcNAc as substrate (in vitro). The protein is Protein O-GlcNAcase of Oceanicola granulosus (strain ATCC BAA-861 / DSM 15982 / KCTC 12143 / HTCC2516).